Reading from the N-terminus, the 653-residue chain is Chaperone protein DnaK (653 aa).

The residue at position 200 (Thr200) is a Phosphothreonine; by autocatalysis. The segment at 612–653 is disordered; that stretch reads QGAAGAAGAAGGAGAAAGAEAAGASQQADDVVDAEFKEVKKD. Residues 627–639 show a composition bias toward low complexity; that stretch reads AAGAEAAGASQQA.

Belongs to the heat shock protein 70 family.

Acts as a chaperone. In Paraburkholderia phymatum (strain DSM 17167 / CIP 108236 / LMG 21445 / STM815) (Burkholderia phymatum), this protein is Chaperone protein DnaK.